The following is a 1041-amino-acid chain: RAS protein activator like-3 (1041 aa).

Residues 1 to 59 form a disordered region; sequence MKPECGQTMFRTFWSRSRDSSAMDPPLQSEEDSQTQPSLPSPLTSYRWHTGGSGEKAAG. Residues 34-44 show a composition bias toward polar residues; that stretch reads QTQPSLPSPLT. Residues S41, S74, S187, S189, S190, S193, S239, S252, S256, and S259 each carry the phosphoserine modification. A coiled-coil region spans residues 218–243; that stretch reads SNQVHNVRKLLKRLKEKKRAKSELGA. Residues 220–321 enclose the PH domain; it reads QVHNVRKLLK…WIEDLRRQFQ (102 aa). The interval 234-256 is disordered; it reads KKRAKSELGAYTPRDGPPSALGS. T262 carries the phosphothreonine modification. Positions 312 to 430 constitute a C2 domain; that stretch reads WIEDLRRQFQ…APAAGLERWF (119 aa). The region spanning 500-708 is the Ras-GAP domain; sequence GRAQALVTDL…PAMQHFLDQV (209 aa). The disordered stretch occupies residues 790 to 910; that stretch reads GEKPGFLAPR…PGDRYQTTGT (121 aa). Phosphoserine occurs at positions 813 and 816. The span at 850–866 shows a compositional bias: basic residues; sequence RPTHRRPSAGSKPRPKG. The stretch at 931–1013 forms a coiled coil; that stretch reads QKALSLLVES…LRDSLQSLQL (83 aa). The interval 1016-1041 is disordered; it reads KTPGSRSQPLPLKAPCVNGADLSMGT.

As to expression, predominantly expressed in hematopoietic tissues.

The protein resides in the cytoplasm. It localises to the cell cortex. Functionally, functions as a Ras GTPase-activating protein. Plays an important role in the expansion and functions of natural killer T (NKT) cells in the liver by negatively regulating RAS activity and the down-stream ERK signaling pathway. The sequence is that of RAS protein activator like-3 (Rasal3) from Mus musculus (Mouse).